The following is a 615-amino-acid chain: MFS-type transporter 1 (615 aa).

Residues 1 to 85 (MTALAAVPDL…GNNVSPHGRH (85 aa)) form a disordered region. Residues 16-53 (PSTTTVHSPNYSGSPADISSSPTTRAVSRNTARQTASA) are compositionally biased toward polar residues. A glycan (N-linked (GlcNAc...) asparagine) is linked at asparagine 25. 6 helical membrane-spanning segments follow: residues 94-114 (CLVIATLSGVSFLNTMGSGIL), 138-158 (VYSLAAGCTLLVFGAVGHIIG), 162-182 (VWITGACLYAAFTLGVGRSAT), 192-212 (VLGVSIAMCLPTAVSLTTNGF), 222-242 (FAFQGMGQPLGYSTGLILGGI), and 251-271 (FGFYISGGINAVLAICALVVL). A glycan (N-linked (GlcNAc...) asparagine) is linked at asparagine 302. 8 helical membrane passes run 320-340 (WTGTLAISASMGFLSYVFSVV), 351-371 (QNIALLVAAALLLPTFTLWVG), 397-417 (AAVFFTWAVFNAFQYFSALYF), 432-452 (FLPMVLVGAATNIVTGYLVET), 455-475 (VRWLVVVSAIFSLFSPLIMAL), 488-508 (FAMLLSPLHPDVLFTVSNLII), 522-542 (AVFNAVSQVGNSVGLGLTAVV), and 585-605 (AAFWLMFGAAALVTVITFLGL).

The protein belongs to the major facilitator superfamily. EmrB family.

The protein localises to the membrane. MFS-type transporter; part of the gene cluster that mediates the biosynthesis of pyriculol and pyriculariol, two heptaketides that induce lesion formation upon application on rice leaves but are dispensable for pathogenicity. With the ABC transporter ABC7, is most likely responsible for pyriculol and pyriculariol secretion and thereby may contribute to intrinsic resistance. In Pyricularia oryzae (strain 70-15 / ATCC MYA-4617 / FGSC 8958) (Rice blast fungus), this protein is MFS-type transporter 1.